The chain runs to 227 residues: PKHD-type hydroxylase PHZ_c0292 (227 aa).

Positions 78-178 (VVFPPLFNRY…RVCSFFWIQS (101 aa)) constitute a Fe2OG dioxygenase domain. The Fe cation site is built by histidine 96, aspartate 98, and histidine 159. Arginine 169 is a binding site for 2-oxoglutarate.

Requires Fe(2+) as cofactor. L-ascorbate is required as a cofactor.

This Phenylobacterium zucineum (strain HLK1) protein is PKHD-type hydroxylase PHZ_c0292.